We begin with the raw amino-acid sequence, 318 residues long: Transaldolase (318 aa).

Lysine 126 serves as the catalytic Schiff-base intermediate with substrate.

It belongs to the transaldolase family. Type 1 subfamily. Homodimer.

It localises to the cytoplasm. It catalyses the reaction D-sedoheptulose 7-phosphate + D-glyceraldehyde 3-phosphate = D-erythrose 4-phosphate + beta-D-fructose 6-phosphate. It participates in carbohydrate degradation; pentose phosphate pathway; D-glyceraldehyde 3-phosphate and beta-D-fructose 6-phosphate from D-ribose 5-phosphate and D-xylulose 5-phosphate (non-oxidative stage): step 2/3. Functionally, transaldolase is important for the balance of metabolites in the pentose-phosphate pathway. The protein is Transaldolase of Cupriavidus metallidurans (strain ATCC 43123 / DSM 2839 / NBRC 102507 / CH34) (Ralstonia metallidurans).